A 329-amino-acid chain; its full sequence is 4-hydroxy-3-methylbut-2-enyl diphosphate reductase (329 aa).

C27 provides a ligand contact to [4Fe-4S] cluster. (2E)-4-hydroxy-3-methylbut-2-enyl diphosphate-binding residues include H56 and H89. The dimethylallyl diphosphate site is built by H56 and H89. Isopentenyl diphosphate contacts are provided by H56 and H89. A [4Fe-4S] cluster-binding site is contributed by C111. (2E)-4-hydroxy-3-methylbut-2-enyl diphosphate is bound at residue H139. Residue H139 coordinates dimethylallyl diphosphate. Residue H139 coordinates isopentenyl diphosphate. E141 serves as the catalytic Proton donor. T179 serves as a coordination point for (2E)-4-hydroxy-3-methylbut-2-enyl diphosphate. C209 contributes to the [4Fe-4S] cluster binding site. Positions 237, 238, 239, and 281 each coordinate (2E)-4-hydroxy-3-methylbut-2-enyl diphosphate. Dimethylallyl diphosphate contacts are provided by S237, S238, N239, and S281. Isopentenyl diphosphate-binding residues include S237, S238, N239, and S281.

It belongs to the IspH family. [4Fe-4S] cluster serves as cofactor.

It catalyses the reaction isopentenyl diphosphate + 2 oxidized [2Fe-2S]-[ferredoxin] + H2O = (2E)-4-hydroxy-3-methylbut-2-enyl diphosphate + 2 reduced [2Fe-2S]-[ferredoxin] + 2 H(+). The enzyme catalyses dimethylallyl diphosphate + 2 oxidized [2Fe-2S]-[ferredoxin] + H2O = (2E)-4-hydroxy-3-methylbut-2-enyl diphosphate + 2 reduced [2Fe-2S]-[ferredoxin] + 2 H(+). It functions in the pathway isoprenoid biosynthesis; dimethylallyl diphosphate biosynthesis; dimethylallyl diphosphate from (2E)-4-hydroxy-3-methylbutenyl diphosphate: step 1/1. Its pathway is isoprenoid biosynthesis; isopentenyl diphosphate biosynthesis via DXP pathway; isopentenyl diphosphate from 1-deoxy-D-xylulose 5-phosphate: step 6/6. Catalyzes the conversion of 1-hydroxy-2-methyl-2-(E)-butenyl 4-diphosphate (HMBPP) into a mixture of isopentenyl diphosphate (IPP) and dimethylallyl diphosphate (DMAPP). Acts in the terminal step of the DOXP/MEP pathway for isoprenoid precursor biosynthesis. The protein is 4-hydroxy-3-methylbut-2-enyl diphosphate reductase of Methylibium petroleiphilum (strain ATCC BAA-1232 / LMG 22953 / PM1).